The following is a 151-amino-acid chain: MGRMHSKGKGIASSALPYVRSPPAWCKADADSVVEQILKFSKKGMSPSQIGVTLRDSHGIPQVRFITGQKIMRILKANGLAPELPEDLYNLIKKAVSVRKHLERNRKDKDSKFRLILIESRIHRLARYYRKVGALPPTWKYESATASALVA.

Residues S21 and S32 each carry the phosphoserine modification.

The protein belongs to the universal ribosomal protein uS15 family. Component of the small ribosomal subunit (SSU). Mature yeast ribosomes consist of a small (40S) and a large (60S) subunit. The 40S small subunit contains 1 molecule of ribosomal RNA (18S rRNA) and at least 33 different proteins. The large 60S subunit contains 3 rRNA molecules (25S, 5.8S and 5S rRNA) and at least 46 different proteins.

It is found in the cytoplasm. Component of the ribosome, a large ribonucleoprotein complex responsible for the synthesis of proteins in the cell. The small ribosomal subunit (SSU) binds messenger RNAs (mRNAs) and translates the encoded message by selecting cognate aminoacyl-transfer RNA (tRNA) molecules. The large subunit (LSU) contains the ribosomal catalytic site termed the peptidyl transferase center (PTC), which catalyzes the formation of peptide bonds, thereby polymerizing the amino acids delivered by tRNAs into a polypeptide chain. The nascent polypeptides leave the ribosome through a tunnel in the LSU and interact with protein factors that function in enzymatic processing, targeting, and the membrane insertion of nascent chains at the exit of the ribosomal tunnel. This is Small ribosomal subunit protein uS15 (rps13) from Schizosaccharomyces pombe (strain 972 / ATCC 24843) (Fission yeast).